A 100-amino-acid chain; its full sequence is Histone H3-like 2 (100 aa).

Residues 1–46 are disordered; it reads MARMKHTARMSTGGKAPRKQLASKALRKAPPPPTKGVKQPTTTTSG.

The protein belongs to the histone H3 family. As to quaternary structure, the nucleosome is a histone octamer containing two molecules each of H2A, H2B, H3 and H4 assembled in one H3-H4 heterotetramer and two H2A-H2B heterodimers. The octamer wraps approximately 147 bp of DNA. In terms of tissue distribution, pollen specific.

Its subcellular location is the nucleus. It localises to the chromosome. In terms of biological role, core component of nucleosome. Nucleosomes wrap and compact DNA into chromatin, limiting DNA accessibility to the cellular machineries which require DNA as a template. Histones thereby play a central role in transcription regulation, DNA repair, DNA replication and chromosomal stability. DNA accessibility is regulated via a complex set of post-translational modifications of histones, also called histone code, and nucleosome remodeling. This chain is Histone H3-like 2 (gcH3), found in Lilium longiflorum (Trumpet lily).